The primary structure comprises 254 residues: Anamorsin homolog (254 aa).

An N-terminal SAM-like domain region spans residues 4–132; the sequence is VQENNHVLYI…EIGSAAKLSL (129 aa). Residues 132–167 are linker; the sequence is LGGNKAKVAAVWKLDVDDDDDERIDEDELLDEEDKV. Positions 177, 186, 189, and 191 each coordinate [2Fe-2S] cluster. The segment at 177 to 191 is fe-S binding site A; sequence CGTTGKRKACKDCSC. [4Fe-4S] cluster contacts are provided by Cys-215, Cys-218, Cys-226, and Cys-229. 2 short sequence motifs (cx2C motif) span residues 215 to 218 and 226 to 229; these read CGSC and CATC. The interval 215–229 is fe-S binding site B; it reads CGSCYLGDAFRCATC.

Belongs to the anamorsin family. Monomer. The cofactor is [2Fe-2S] cluster. It depends on [4Fe-4S] cluster as a cofactor.

Its subcellular location is the cytoplasm. The protein resides in the mitochondrion intermembrane space. In terms of biological role, component of the cytosolic iron-sulfur (Fe-S) protein assembly (CIA) machinery. Required for the maturation of extramitochondrial Fe-S proteins. Part of an electron transfer chain functioning in an early step of cytosolic Fe-S biogenesis, facilitating the de novo assembly of a [4Fe-4S] cluster on the cytosolic Fe-S scaffold complex. Electrons are transferred from NADPH via a FAD- and FMN-containing diflavin oxidoreductase. Together with the diflavin oxidoreductase, also required for the assembly of the diferric tyrosyl radical cofactor of ribonucleotide reductase (RNR), probably by providing electrons for reduction during radical cofactor maturation in the catalytic small subunit. The sequence is that of Anamorsin homolog from Aedes aegypti (Yellowfever mosquito).